The primary structure comprises 64 residues: U6-theraphotoxin-Cg1a (64 aa).

An N-terminal signal peptide occupies residues 1–20 (MTRKILAVLLVFTLVACNNA). Residues 21-38 (EKYSETDVEDSPMIQERR) constitute a propeptide that is removed on maturation. Intrachain disulfides connect cysteine 39–cysteine 55, cysteine 46–cysteine 58, and cysteine 54–cysteine 63.

This sequence belongs to the neurotoxin 36 family. 02 subfamily. Expressed by the venom gland.

The protein resides in the secreted. Its function is as follows. Probable ion channel inhibitor. The sequence is that of U6-theraphotoxin-Cg1a from Chilobrachys guangxiensis (Chinese earth tiger tarantula).